A 692-amino-acid chain; its full sequence is Putative clathrin assembly protein At1g14910 (692 aa).

The ENTH domain occupies 24–161; sequence RVNSDYAELD…ECFRVLKYDI (138 aa). Residues 325 to 383 form a disordered region; that stretch reads YTPDDGLTSEDVGPSHEEHETSSPSDSAVVPSEETQLSSQSPPSVETPQNFIDTDDLLG. Residues 357–376 show a composition bias toward polar residues; the sequence is EETQLSSQSPPSVETPQNFI. The residue at position 363 (S363) is a Phosphoserine. Repeat 1 spans residues 532 to 548; that stretch reads FGEFPIVPVSEPQSTTS. The interval 532-666 is 8 X 17 AA approximate tandem repeats; that stretch reads FGEFPIVPVS…PVSEPQNTTG (135 aa). Residues 549 to 564 form a 2; truncated repeat; that stretch reads FGAFPVPVSEPSNTTG. A run of 6 repeats spans residues 565 to 581, 582 to 598, 599 to 615, 616 to 632, 633 to 649, and 650 to 666.

As to expression, expressed in the whole plant.

The protein localises to the membrane. The protein resides in the clathrin-coated pit. Its subcellular location is the golgi apparatus. It is found in the cytoplasmic vesicle. It localises to the clathrin-coated vesicle. In Arabidopsis thaliana (Mouse-ear cress), this protein is Putative clathrin assembly protein At1g14910.